The chain runs to 396 residues: Cathepsin D (396 aa).

Positions 1 to 18 (MKMLLLCVFSALALTNDA) are cleaved as a signal peptide. Residues 19–61 (LVRIPLKKFRSIRRQLTDSGKRAEELLADHHSLKYNLSFPASN) constitute a propeptide, activation peptide. The Peptidase A1 domain occupies 76-393 (YYGEIGLGTP…DRDANRVGFA (318 aa)). The active site involves Asp-94. Residues Cys-107 and Cys-114 are joined by a disulfide bond. 2 N-linked (GlcNAc...) asparagine glycosylation sites follow: Asn-131 and Asn-249. Cysteines 272 and 276 form a disulfide. The active site involves Asp-281. Cysteines 315 and 352 form a disulfide.

It belongs to the peptidase A1 family. As to quaternary structure, monomer.

It is found in the lysosome. It catalyses the reaction Specificity similar to, but narrower than, that of pepsin A. Does not cleave the 4-Gln-|-His-5 bond in B chain of insulin.. Inhibited by pepstatin. Its function is as follows. Acid protease active in intracellular protein breakdown. The protein is Cathepsin D (ctsd) of Chionodraco hamatus (Antarctic teleost icefish).